The primary structure comprises 190 residues: Large ribosomal subunit protein uL22 (190 aa).

The disordered stretch occupies residues 111 to 190 (SVQSTKAKAK…TKKKTEGEEK (80 aa)). The segment covering 125–147 (IKSEDSKNSLKVTESKADSKVDA) has biased composition (basic and acidic residues). The segment covering 167–178 (AKVATTKSTATR) has biased composition (low complexity).

This sequence belongs to the universal ribosomal protein uL22 family. In terms of assembly, part of the 50S ribosomal subunit.

Functionally, this protein binds specifically to 23S rRNA; its binding is stimulated by other ribosomal proteins, e.g. L4, L17, and L20. It is important during the early stages of 50S assembly. It makes multiple contacts with different domains of the 23S rRNA in the assembled 50S subunit and ribosome. The globular domain of the protein is located near the polypeptide exit tunnel on the outside of the subunit, while an extended beta-hairpin is found that lines the wall of the exit tunnel in the center of the 70S ribosome. The chain is Large ribosomal subunit protein uL22 from Helicobacter hepaticus (strain ATCC 51449 / 3B1).